Consider the following 261-residue polypeptide: tRNA pseudouridine synthase A (261 aa).

Aspartate 51 acts as the Nucleophile in catalysis. Residue tyrosine 109 participates in substrate binding.

Belongs to the tRNA pseudouridine synthase TruA family. As to quaternary structure, homodimer.

It catalyses the reaction uridine(38/39/40) in tRNA = pseudouridine(38/39/40) in tRNA. Functionally, formation of pseudouridine at positions 38, 39 and 40 in the anticodon stem and loop of transfer RNAs. The polypeptide is tRNA pseudouridine synthase A (Shewanella sp. (strain W3-18-1)).